A 2731-amino-acid polypeptide reads, in one-letter code: Teneurin-1 (2731 aa).

The disordered stretch occupies residues 1–72 (MEQTDCKPYQ…KRKDVEKSTQ (72 aa)). The Teneurin N-terminal domain maps to 1–318 (MEQTDCKPYQ…KPYRCCNWKC (318 aa)). Residues 1-324 (MEQTDCKPYQ…NWKCTALSAT (324 aa)) are Cytoplasmic-facing. The segment covering 44–55 (ETLHEYNQELRR) has biased composition (basic and acidic residues). The short motif at 62 to 65 (RKRK) is the Nuclear localization signal (NLS) element. Phosphoserine is present on Ser105. Phosphothreonine is present on Thr109. Ser116 carries the post-translational modification Phosphoserine. The tract at residues 175–241 (DSAQDMQSSP…PAPPTSTQDS (67 aa)) is disordered. Over residues 178 to 189 (QDMQSSPHNQFT) the composition is skewed to polar residues. Pro residues predominate over residues 192 to 201 (PLPPPPPPPH). Polar residues predominate over residues 214–224 (DSLQRRSMTTR). The Required for interaction with SORBS1 (Ten-1 ICD form) motif lies at 290–297 (PPPRPLPR). A helical membrane pass occupies residues 325–345 (AITVTLALLLAYVIAVHLFGL). The Extracellular portion of the chain corresponds to 346-2731 (TWQLQPVGQI…FMRQSEIGRR (2386 aa)). Residue Asn432 is glycosylated (N-linked (GlcNAc...) asparagine). EGF-like domains follow at residues 527-558 (IMDD…PDCA), 559-590 (RDSC…ECDV), 591-623 (PEEQ…EICE), 624-656 (EEDC…NCET), 657-690 (PLPI…SDCS), 691-720 (TELC…GPTC), 721-752 (EERS…DHCT), and 760-795 (VRDG…TGCN). 22 disulfides stabilise this stretch: Cys531/Cys541, Cys535/Cys546, Cys548/Cys557, Cys566/Cys577, Cys579/Cys588, Cys595/Cys606, Cys600/Cys611, Cys613/Cys622, Cys627/Cys638, Cys632/Cys643, Cys645/Cys654, Cys665/Cys678, Cys680/Cys689, Cys694/Cys704, Cys698/Cys709, Cys711/Cys720, Cys725/Cys735, Cys729/Cys740, Cys742/Cys751, Cys764/Cys774, Cys768/Cys783, and Cys785/Cys794. Residues Asn904 and Asn1083 are each glycosylated (N-linked (GlcNAc...) asparagine). NHL repeat units lie at residues 1193–1218 (LFAP…VRRI), 1298–1342 (SHCG…NAVI), 1357–1408 (LSCD…IAGR), 1420–1464 (FLVS…VTTN), and 1487–1530 (CFSG…ISKN). Residues 1540 to 1559 (YEIASPADQELYQFTVNGTH) form a YD 1 repeat. Residues Asn1556 and Asn1573 are each glycosylated (N-linked (GlcNAc...) asparagine). 4 YD repeats span residues 1576–1596 (YNAE…VHIR), 1614–1638 (YWLT…ALMT), 1639–1660 (YPGN…TVYE), and 1661–1681 (YDPE…SSFH). Residues Asn1669, Asn1705, Asn1743, Asn1763, Asn1787, and Asn1848 are each glycosylated (N-linked (GlcNAc...) asparagine). YD repeat units lie at residues 1851–1870 (YSPS…EKME), 1871–1891 (YDQS…WSYT), 1892–1910 (YLEK…YIFE), 1911–1931 (YDQS…HSLQ), 1939–1955 (YRNI…FIQD), 1956–1975 (YSRD…RRVL), 1976–1995 (YKYT…TQVT), 1998–2018 (YEES…FICT), 2021–2041 (YRQT…EGLV), 2091–2111 (YDLN…FNAN), and 2119–2139 (YEIL…MGRM). Asn2151 is a glycosylation site (N-linked (GlcNAc...) asparagine). 5 YD repeats span residues 2159–2179 (YDAD…WRYS), 2180–2200 (YDLN…LTPL), 2202–2222 (YDLR…DEDG), 2234–2254 (YNSN…TVQY), and 2256–2276 (YDGL…LQFF). N-linked (GlcNAc...) asparagine glycosylation occurs at Asn2291. YD repeat units follow at residues 2302–2319 (YDLQ…GEEY) and 2320–2343 (YVAC…IKEI). Residue Ser2586 is modified to Phosphoserine. A glycan (N-linked (GlcNAc...) asparagine) is linked at Asn2608.

The protein belongs to the tenascin family. Teneurin subfamily. As to quaternary structure, homodimer; disulfide-linked. Heterodimer with either TENM2 or TENM3. May also form heterodimer with TENM4. Ten-1 ICD interacts with SORBS1 (via third SH3 domain). Interacts with MBD1 isoform 2. Ten-1 ICD interacts with HINT1. Once secreted, may also be cleaved to give rise to the TCAP-1 form. Post-translationally, derives from the plasma membrane form by proteolytic processing. Further proteolytic cleavage may generate 11.9 and 4.7 kDa bioactive peptides. Isoform 1 and isoform 2 are expressed in the brain. Isoform 2 is expressed in the granular layer of the dentate gyrus and the pyramidal layer (Py) of the CA1, CA2 and CA3 of the hippocampus (at protein level). Expressed in the cortex, thalamus, CA1, CA2, CA3, dentate gyrus and granular layer of the hippocampus. Weakly expressed in kidney, testis and lung.

It localises to the cell membrane. The protein resides in the cytoplasm. Its subcellular location is the secreted. It is found in the nucleus. The protein localises to the nucleus speckle. It localises to the nucleus matrix. The protein resides in the cytoskeleton. Its function is as follows. Involved in neural development, regulating the establishment of proper connectivity within the nervous system. May function as a cellular signal transducer. In terms of biological role, plays a role in the regulation of neuroplasticity in the limbic system. Mediates a rapid reorganization of actin- and tubulin-based cytoskeleton elements with an increase in dendritic arborization and spine density formation of neurons in the hippocampus and amygdala. Induces BDNF transcription inhibition in neurons. Activates the mitogen-activated protein (MAP) kinase 2 (MEK2) and extracellular signal-regulated kinase (ERK) cascade. Also acts as a bioactive neuroprotective peptide on limbic neurons of the brain and regulates stress-induced behavior: attenuates alkalosis-associated necrotic cell death and the effects of corticotropin-releasing factor (CRF) on c-fos/FOS induction and on the reinstatement of cocaine seeking. Functionally, induces gene transcription activation. The chain is Teneurin-1 (Tenm1) from Mus musculus (Mouse).